The chain runs to 322 residues: MIQRGFTMQERREKQGNNSPYLLTPYEMANLVFKTGAISFTVSAGTQPFQYLLNKLQFSQSGTPSGLSGGLFRGMYRGFLPYAIAGQKRGAVAVTHKQTNKVTEEEEFEAPFRQRWWGTIFFSQADLLVSNGLSGKARLQNVGVINAENFKWSLSNFWKLTSVNWGSRSFAGGVNFALIGFAGDYVSSFYKFDKDLYNKILGGATSGVIATLFTTAPNAYADSKLLQTKVAENNRLITVSPYTMFGQMKSHVKAVGLKEAFMTFFKVSYLQQVAVRAPQAAITFALIFGMDEYMGPQPLKKVWPGRVEELESENPSPSPTKK.

Residue serine 68 is part of the active site.

The protein resides in the secreted. Its subcellular location is the host mitochondrion membrane. Its function is as follows. Serine protease effector that inhibits host cell autophagy by targeting SNX17. Localizes to the host endoplasmic reticulum-mitochondria contact site and catalyzes degradation of host SNX17, thereby impairing endoplasmic reticulum-mitochondria communication, leading to inhibit autophagy as well as staurosporine-induced apoptosis. This is Serine protease Lpg1137 from Legionella pneumophila subsp. pneumophila (strain Philadelphia 1 / ATCC 33152 / DSM 7513).